The following is a 189-amino-acid chain: Glucose-6-phosphate isomerase (189 aa).

The Fe cation site is built by His-88, His-90, Glu-97, and His-136.

The protein belongs to the archaeal-type GPI family. In terms of assembly, homodimer. Fe cation is required as a cofactor.

The protein localises to the cytoplasm. The catalysed reaction is alpha-D-glucose 6-phosphate = beta-D-fructose 6-phosphate. Its pathway is carbohydrate degradation; glycolysis; D-glyceraldehyde 3-phosphate and glycerone phosphate from D-glucose: step 2/4. Its activity is regulated as follows. Inhibited by mannose 6-phosphate, fructose 1-phosphate and fructose 1,6-bisphosphate. The chain is Glucose-6-phosphate isomerase (pgiA) from Pyrococcus furiosus (strain ATCC 43587 / DSM 3638 / JCM 8422 / Vc1).